A 478-amino-acid polypeptide reads, in one-letter code: MKKQWTRRSAAAIAMVTTLLLSSHSFAASEKTERVDPRNEAYAKQHADQYESWRPTSDSVQIEDALAEDPNMVILWAGYGFAKDYNKARGHFYAIDDVRETLRTAGPTDENSGPMPMACWSCKSPDVGRVIEEQGEDGYFSGKWARLGSEIQNPIGCADCHDTRSEEFKNGGPALAITKPHVERAMNAIGKPFDDQSRLDKQASVCGQCHVEYYFTGKTKAVKFPWDKGTTVDEMEEYYDEIGFSDWTHKVSKAPMLKAQHPGYETWREGIHGKNKVVCVDCHMPKVTREDGTVYTDHKVGNPFDRFEDTCANCHTQSKDMLREIVSSRKAQVLKMKLTAERQIVAAHFEAGAAWDAGATKEEMAPILQDIRHAQWRWDYAIASHGIHMHAPEVALEVLGSAVDRAADARTKLVRLLAKKGITDPIEIPDISTKAAAQKALGMDMEGMEAEKKHFLETVVPKWDQQAKEREAADYHPL.

The N-terminal stretch at 1-27 (MKKQWTRRSAAAIAMVTTLLLSSHSFA) is a signal peptide. Residue His-91 coordinates heme c. 3 residues coordinate heme: Cys-119, Cys-122, and Lys-123. Heme c is bound by residues Cys-157, Cys-160, His-161, Cys-206, Cys-209, and His-210. Residues Glu-212, Tyr-213, Lys-258, and Gln-260 each contribute to the Ca(2+) site. Tyr-213 serves as a coordination point for substrate. His-261 provides a ligand contact to substrate. Positions 272, 279, 282, 283, 298, 311, 314, 315, and 390 each coordinate heme c.

It belongs to the cytochrome c-552 family. Ca(2+) is required as a cofactor. The cofactor is heme c.

It localises to the periplasm. The enzyme catalyses 6 Fe(III)-[cytochrome c] + NH4(+) + 2 H2O = 6 Fe(II)-[cytochrome c] + nitrite + 8 H(+). It participates in nitrogen metabolism; nitrate reduction (assimilation). Functionally, catalyzes the reduction of nitrite to ammonia, consuming six electrons in the process. In Aliivibrio salmonicida (strain LFI1238) (Vibrio salmonicida (strain LFI1238)), this protein is Cytochrome c-552.